We begin with the raw amino-acid sequence, 527 residues long: Putative ribose/galactose/methyl galactoside import ATP-binding protein 2 (527 aa).

Residues Met1–Ser31 form a disordered region. The span at Gly12–Ser31 shows a compositional bias: low complexity. ABC transporter domains follow at residues Leu38–Glu274 and Val284–Asp523. Gly70–Ser77 is an ATP binding site.

The protein belongs to the ABC transporter superfamily. Carbohydrate importer 2 (CUT2) (TC 3.A.1.2) family.

Its subcellular location is the cell inner membrane. The catalysed reaction is D-ribose(out) + ATP + H2O = D-ribose(in) + ADP + phosphate + H(+). The enzyme catalyses D-galactose(out) + ATP + H2O = D-galactose(in) + ADP + phosphate + H(+). Its function is as follows. Part of an ABC transporter complex involved in carbohydrate import. Could be involved in ribose, galactose and/or methyl galactoside import. Responsible for energy coupling to the transport system. The chain is Putative ribose/galactose/methyl galactoside import ATP-binding protein 2 from Burkholderia lata (strain ATCC 17760 / DSM 23089 / LMG 22485 / NCIMB 9086 / R18194 / 383).